A 719-amino-acid polypeptide reads, in one-letter code: Developmental regulator flbA (719 aa).

Residues 1–17 show a composition bias toward polar residues; sequence MPTSISTAPLSQGSPPS. Disordered regions lie at residues 1–39, 117–141, and 155–190; these read MPTSISTAPLSQGSPPSSLIDYQPQSVPSSSSPPPSTAA, IGSTTNSSLRQSASSGSLQKHSRKA, and LSPPLSDGSGSSEQSSSAPFEPLSAVTEQPNPAAER. 2 stretches are compositionally biased toward low complexity: residues 123–135 and 158–171; these read SSLRQSASSGSLQ and PLSDGSGSSEQSSS. A fungal-DR region spans residues 214 to 411; the sequence is QTSSRLLRMT…QDGPNVKSSV (198 aa). A DEP domain is found at 425-511; the sequence is GLVGVKMARE…SKNAIYAITE (87 aa). An RGS domain is found at 540–685; it reads SNNARLNHIL…FLRDPKYSAI (146 aa). The interval 694–719 is disordered; sequence LIGGGRSYSPTPGNVPERSMSRSQRS.

Functionally, required for asexual sporulation and normal colony development. May be involved in brlA activation. Could play a regulatory role in controlling the flug-initiated signal transduction pathway that triggers the asexual reproduction. This Emericella nidulans (strain FGSC A4 / ATCC 38163 / CBS 112.46 / NRRL 194 / M139) (Aspergillus nidulans) protein is Developmental regulator flbA (flbA).